Consider the following 90-residue polypeptide: Translation initiation factor IF-1 (90 aa).

In terms of domain architecture, S1-like spans 7-76 (KEDVIRMEGT…TRGRIVYRKK (70 aa)).

This sequence belongs to the IF-1 family. As to quaternary structure, component of the 30S ribosomal translation pre-initiation complex which assembles on the 30S ribosome in the order IF-2 and IF-3, IF-1 and N-formylmethionyl-tRNA(fMet); mRNA recruitment can occur at any time during PIC assembly.

The protein resides in the cytoplasm. Functionally, one of the essential components for the initiation of protein synthesis. Stabilizes the binding of IF-2 and IF-3 on the 30S subunit to which N-formylmethionyl-tRNA(fMet) subsequently binds. Helps modulate mRNA selection, yielding the 30S pre-initiation complex (PIC). Upon addition of the 50S ribosomal subunit IF-1, IF-2 and IF-3 are released leaving the mature 70S translation initiation complex. This is Translation initiation factor IF-1 from Fervidobacterium nodosum (strain ATCC 35602 / DSM 5306 / Rt17-B1).